A 73-amino-acid chain; its full sequence is Putative ORF9c protein (73 aa).

The helical transmembrane segment at 47-67 threads the bilayer; that stretch reads AAVGELLLLEWLAMAVMLLLL.

Its subcellular location is the membrane. May induce apoptosis in cardiomyocytes when overexpressed ex-vivo. This is Putative ORF9c protein from Homo sapiens (Human).